A 264-amino-acid chain; its full sequence is ATP synthase subunit a (264 aa).

The next 6 helical transmembrane spans lie at 29–49 (TWHI…LWIF), 87–107 (NALI…MNFM), 134–154 (DVNI…YYSI), 177–197 (IPVN…SLAL), 208–228 (LIFI…SLGV), and 235–255 (LIFH…LTIV).

It belongs to the ATPase A chain family. In terms of assembly, F-type ATPases have 2 components, CF(1) - the catalytic core - and CF(0) - the membrane proton channel. CF(1) has five subunits: alpha(3), beta(3), gamma(1), delta(1), epsilon(1). CF(0) has three main subunits: a(1), b(2) and c(9-12). The alpha and beta chains form an alternating ring which encloses part of the gamma chain. CF(1) is attached to CF(0) by a central stalk formed by the gamma and epsilon chains, while a peripheral stalk is formed by the delta and b chains.

The protein localises to the cell inner membrane. Functionally, key component of the proton channel; it plays a direct role in the translocation of protons across the membrane. The polypeptide is ATP synthase subunit a (Shewanella sp. (strain MR-4)).